Reading from the N-terminus, the 79-residue chain is Sulfur carrier protein TusA (79 aa).

The Cysteine persulfide intermediate role is filled by cysteine 15.

It belongs to the sulfur carrier protein TusA family. In terms of assembly, interacts with IscS.

Its subcellular location is the cytoplasm. The protein operates within tRNA modification. Sulfur carrier protein involved in sulfur trafficking in the cell. Part of a sulfur-relay system required for 2-thiolation during synthesis of 2-thiouridine of the modified wobble base 5-methylaminomethyl-2-thiouridine (mnm(5)s(2)U) in tRNA. Interacts with IscS and stimulates its cysteine desulfurase activity. Accepts an activated sulfur from IscS, which is then transferred to TusD, and thus determines the direction of sulfur flow from IscS to 2-thiouridine formation. Also appears to be involved in sulfur transfer for the biosynthesis of molybdopterin. The protein is Sulfur carrier protein TusA of Buchnera aphidicola subsp. Baizongia pistaciae (strain Bp).